The primary structure comprises 934 residues: Intimin (934 aa).

Positions 1-39 (MITHGCYTRTRHKHKLKKTLIMLSAGLGLFFYVNQNSFA) are cleaved as a signal peptide. Residues 40–153 (NGENYFKLGS…KLTKMSPDVT (114 aa)) are peptidoglycan-binding. The tract at residues 40-153 (NGENYFKLGS…KLTKMSPDVT (114 aa)) is sufficient for homodimerization. Residues 40–212 (NGENYFKLGS…LQAWLQHYGT (173 aa)) are required for periplasmic localization. One can recognise a LysM domain in the interval 63–112 (LFYTLKTGETVADLSKSQDINLSTIWSLNKHLYSSESEMMKAAPGQQIIL). Residues 210–411 (YGTAEVNLQS…LYSMQFRYQF (202 aa)) form an inverse autotransporter region. Residues 402–411 (LYSMQFRYQF) are signature sequence for beta-barrel assembly machinery (BAM), which recognizes the unfolded beta-barrel in the periplasm. The interval 437 to 449 (LVQRNNNIILEYK) is minimum linker residues necessary for formation of a heat-modifiable beta-barrel. Big-1 domains follow at residues 560 to 653 (VTDF…VIFF) and 660 to 753 (ITEI…VTFF). An intimin receptor Tir-binding region spans residues 747–934 (ATEVTFFDEL…TPNVYAVCVE (188 aa)). A BIG2 domain is found at 787-833 (ASGGDGTYSWYSENTSIATVDASGKVTLNGKGSVVIKATSGDKQTVS). C858 and C932 are joined by a disulfide.

It belongs to the intimin/invasin family. Homodimer. Interacts with Tir.

It localises to the cell outer membrane. Functionally, an inverse autotransporter. Adhesin, which mediates attachment to the human intestine epithelial cells. Necessary for the production of attaching and effacing lesions on infected human tissue culture cells. Anchored to the outer membrane by binding to peptidoglycan (PGN) via its periplasmic domain, thus helping in receptor interactions during host invasion. PGN-binding may also aid in resisting mechanical and chemical stress during transit of the bacterium through the gastrointestinal tract of the host. The polypeptide is Intimin (Escherichia coli O157:H7).